The primary structure comprises 763 residues: Dual specificity tyrosine-phosphorylation-regulated kinase 1A (763 aa).

Ser14 is modified (phosphoserine). Residues 32 to 57 (GQMPHSHQYSDRRQPNISDQQVSALS) form a disordered region. A compositionally biased stretch (polar residues) spans 46–57 (PNISDQQVSALS). Tyr111 is subject to Phosphotyrosine; by autocatalysis. Residues 115 to 136 (KKRRHQQGQGDDSSHKKERKVY) form a disordered region. A Bipartite nuclear localization signal motif is present at residues 117–134 (RRHQQGQGDDSSHKKERK). At Tyr140 the chain carries Phosphotyrosine; by autocatalysis. Tyr145 bears the Phosphotyrosine mark. Tyr159 carries the phosphotyrosine; by autocatalysis modification. Residues 159–479 (YEIDSLIGKG…PYYALQHSFF (321 aa)) enclose the Protein kinase domain. 165–173 (IGKGSFGQV) contributes to the ATP binding site. At Tyr177 the chain carries Phosphotyrosine; by autocatalysis. Residue Lys188 coordinates ATP. The residue at position 219 (Tyr219) is a Phosphotyrosine; by autocatalysis. An ATP-binding site is contributed by 238-241 (FEML). Asp287 acts as the Proton acceptor in catalysis. Position 310 is a phosphoserine; by autocatalysis (Ser310). Phosphotyrosine; by autocatalysis occurs at positions 319 and 321. Thr402 bears the Phosphothreonine; by autocatalysis mark. The interval 408–442 (TKDGKREYKPPGTRKLHNILGVETGGPGGRRAGES) is disordered. At Tyr449 the chain carries Phosphotyrosine; by autocatalysis. The segment covering 485 to 501 (EGTNTSNSVSTSPAMEQ) has biased composition (polar residues). 3 disordered regions span residues 485–540 (EGTN…HSGG), 596–679 (NALH…GNQA), and 744–763 (DREE…VASS). Over residues 502–525 (SQSSGTTSSTSSSSGGSSGTSNSG) the composition is skewed to low complexity. Residues Ser529 and Ser538 each carry the phosphoserine modification. The histidine-rich domain (HRD) stretch occupies residues 595 to 625 (QNALHHHHGNSSHHHHHHHHHHHHHGQQALG). Basic residues predominate over residues 598-620 (LHHHHGNSSHHHHHHHHHHHHHG). Polar residues predominate over residues 634–645 (NSPTNSSSTQDS). Residues 654 to 672 (SMTSLSSSTTSSSTSSSST) show a composition bias toward low complexity. 2 positions are modified to phosphoserine: Ser748 and Ser758. The span at 754-763 (CVQQSPVASS) shows a compositional bias: polar residues.

The protein belongs to the protein kinase superfamily. CMGC Ser/Thr protein kinase family. MNB/DYRK subfamily. In terms of assembly, interacts with RAD54L2/ARIP4. Interacts with CRY2. Interacts with RANBP9. Interacts with WDR68. Interacts with SIRT1. (Microbial infection) Interacts with human adenovirus 5 E1A protein. In terms of processing, autophosphorylated on numerous tyrosine residues. Can also autophosphorylate on serine and threonine residues (in vitro). In terms of tissue distribution, ubiquitous. Highest levels in skeletal muscle, testis, fetal lung and fetal kidney.

It localises to the nucleus. Its subcellular location is the nucleus speckle. The catalysed reaction is L-seryl-[protein] + ATP = O-phospho-L-seryl-[protein] + ADP + H(+). The enzyme catalyses L-threonyl-[protein] + ATP = O-phospho-L-threonyl-[protein] + ADP + H(+). It catalyses the reaction L-tyrosyl-[protein] + ATP = O-phospho-L-tyrosyl-[protein] + ADP + H(+). It carries out the reaction [DNA-directed RNA polymerase] + ATP = phospho-[DNA-directed RNA polymerase] + ADP + H(+). With respect to regulation, inhibited by RANBP9. Inhibited by harmine, leucettamine B and leucettine L41. Its function is as follows. Dual-specificity kinase which possesses both serine/threonine and tyrosine kinase activities. Exhibits a substrate preference for proline at position P+1 and arginine at position P-3. Plays an important role in double-strand breaks (DSBs) repair following DNA damage. Mechanistically, phosphorylates RNF169 and increases its ability to block accumulation of TP53BP1 at the DSB sites thereby promoting homologous recombination repair (HRR). Also acts as a positive regulator of transcription by acting as a CTD kinase that mediates phosphorylation of the CTD (C-terminal domain) of the large subunit of RNA polymerase II (RNAP II) POLR2A. May play a role in a signaling pathway regulating nuclear functions of cell proliferation. Modulates alternative splicing by phosphorylating the splice factor SRSF6. Has pro-survival function and negatively regulates the apoptotic process. Promotes cell survival upon genotoxic stress through phosphorylation of SIRT1. This in turn inhibits p53/TP53 activity and apoptosis. Phosphorylates SEPTIN4, SEPTIN5 and SF3B1 at 'Thr-434'. In Homo sapiens (Human), this protein is Dual specificity tyrosine-phosphorylation-regulated kinase 1A.